A 669-amino-acid polypeptide reads, in one-letter code: DNA mismatch repair protein MutL (669 aa).

The span at Phe-356 to Ser-371 shows a compositional bias: basic and acidic residues. A disordered region spans residues Phe-356–Pro-379.

Belongs to the DNA mismatch repair MutL/HexB family.

This protein is involved in the repair of mismatches in DNA. It is required for dam-dependent methyl-directed DNA mismatch repair. May act as a 'molecular matchmaker', a protein that promotes the formation of a stable complex between two or more DNA-binding proteins in an ATP-dependent manner without itself being part of a final effector complex. This Staphylococcus aureus (strain MRSA252) protein is DNA mismatch repair protein MutL.